The sequence spans 274 residues: NAD(P)H dehydrogenase [quinone] 1 (274 aa).

FAD is bound by residues His-12, 18–19, and Gln-67; that span reads FN. A Phosphoserine modification is found at Ser-82. An FAD-binding site is contributed by 104-107; that stretch reads LQWF. Position 126 to 128 (126 to 128) interacts with substrate; it reads AYT. Residues 148–151, Tyr-156, and Arg-201 contribute to the FAD site; that span reads TTGG. Residues 225-274 form an important for apoenzyme conformational stability region; it reads PSSLFDLNFQAGFLMKKEVQDEEKNKKFGLSVGHHLGKSIPTDNQIKARK. Glycyl lysine isopeptide (Lys-Gly) (interchain with G-Cter in SUMO2) cross-links involve residues Lys-250 and Lys-251.

The protein belongs to the NAD(P)H dehydrogenase (quinone) family. Homodimer. Interacts with PDLIM4 isoform 2; this interaction stabilizes PDLIM4 isoform 2 in response to oxidative stress and protects it from ubiquitin-independent degradation by the core 20S proteasome. Interacts with TP73 (via SAM domain); this interaction is NADH-dependent, stabilizes TP73 in response to oxidative stress and protects it from ubiquitin-independent degradation by the 20S proteasome. Interacts with TP53; this interaction is NADH-dependent, stabilizes TP53 in response to oxidative stress and protects it from ubiquitin-independent degradation by the 20S proteasome. FAD is required as a cofactor.

It localises to the cytoplasm. The protein localises to the cytosol. It carries out the reaction a quinone + NADH + H(+) = a quinol + NAD(+). The catalysed reaction is a quinone + NADPH + H(+) = a quinol + NADP(+). The enzyme catalyses ubiquinone-10 + NADH + H(+) = ubiquinol-10 + NAD(+). It catalyses the reaction menadione + NADH + H(+) = menadiol + NAD(+). Its activity is regulated as follows. Inhibited by dicoumarol. Functionally, flavin-containing quinone reductase that catalyzes two-electron reduction of quinones to hydroquinones using either NADH or NADPH as electron donors. In a ping-pong kinetic mechanism, the electrons are sequentially transferred from NAD(P)H to flavin cofactor and then from reduced flavin to the quinone, bypassing the formation of semiquinone and reactive oxygen species. Regulates cellular redox state primarily through quinone detoxification. Reduces components of plasma membrane redox system such as coenzyme Q and vitamin quinones, producing antioxidant hydroquinone forms. In the process may function as superoxide scavenger to prevent hydroquinone oxidation and facilitate excretion. Alternatively, can activate quinones and their derivatives by generating redox reactive hydroquinones with DNA cross-linking antitumor potential. Acts as a gatekeeper of the core 20S proteasome known to degrade proteins with unstructured regions. Upon oxidative stress, interacts with tumor suppressors TP53 and TP73 in a NADH-dependent way and inhibits their ubiquitin-independent degradation by the 20S proteasome. This Homo sapiens (Human) protein is NAD(P)H dehydrogenase [quinone] 1.